The primary structure comprises 488 residues: MKFKDLRDFVQQLEQRGELKRIQIPVSPVLEMTEVCDRTLRAKGPALLFEKPTGYDIPVLGNLFGTPERVAMGMGAESVSELREIGKLLAFLKEPEPPKGLKDAWSKLPIFRKIIAMAPKVIKDAPCQEVVIEGDDVDLAMLPVQTCWSGDVAPLITWGLTVTKGPNKDRQNLGIYRQQVIGRNKVIMRWLSHRGGALDFREWCEKHPGQPFPVSVALGADPATILGAVTPVPDSLSEYAFAGLLRDSRTELVKCRGNDLQVPATAEIILEGVIHPGEMADEGPYGDHTGYYNEVDSFPVFTVERITHRIKPIYHSTYTGRPPDEPAILGVALNEVFVPILQKQFPEITDFYLPPEGCSYRMAVVTMKKSYPGHAKRVMLGVWSFLRQFMYTKFVIVTDDDINARDWNDVIWAITTRMDPKRDTVMIDNTPIDYLDFASPVSGLGSKMGLDATHKWPGETTREWGRVIVKDDAVTQRIDAIWNQLGID.

Mn(2+) is bound at residue Asn172. Prenylated FMN-binding positions include 175–177, 189–191, and 194–195; these read IYR, RWL, and RG. Position 238 (Glu238) interacts with Mn(2+). Asp287 serves as the catalytic Proton donor.

The protein belongs to the UbiD family. In terms of assembly, homohexamer. Prenylated FMN is required as a cofactor. Mn(2+) serves as cofactor.

The protein resides in the cell membrane. It carries out the reaction a 4-hydroxy-3-(all-trans-polyprenyl)benzoate + H(+) = a 2-(all-trans-polyprenyl)phenol + CO2. Its pathway is cofactor biosynthesis; ubiquinone biosynthesis. Catalyzes the decarboxylation of 3-octaprenyl-4-hydroxy benzoate to 2-octaprenylphenol, an intermediate step in ubiquinone biosynthesis. The protein is 3-octaprenyl-4-hydroxybenzoate carboxy-lyase of Pseudomonas fluorescens (strain Pf0-1).